The sequence spans 90 residues: Acylphosphatase (90 aa).

One can recognise an Acylphosphatase-like domain in the interval 5–90 (CERFIVKGHV…YKPFRGFKIL (86 aa)). Residues Arg20 and Asn38 contribute to the active site.

Belongs to the acylphosphatase family.

It carries out the reaction an acyl phosphate + H2O = a carboxylate + phosphate + H(+). In Vibrio parahaemolyticus serotype O3:K6 (strain RIMD 2210633), this protein is Acylphosphatase (acyP).